The following is a 37-amino-acid chain: Mu-agatoxin-Aa1d (37 aa).

4 disulfide bridges follow: Cys2/Cys18, Cys9/Cys23, Cys17/Cys33, and Cys25/Cys31. An Asparagine amide modification is found at Asn37.

It belongs to the neurotoxin 07 (Beta/delta-agtx) family. 03 (aga-4) subfamily. Aga sub-subfamily. Expressed by the venom gland.

It localises to the secreted. Its function is as follows. Insecticidal neurotoxin that induces an irreversible spastic paralysis when injected into insects. Modifies presynaptic voltage-gated sodium channels (Nav), causing them to open at the normal resting potential of the nerve. This leads to spontaneous release of neurotransmitter and repetitive action potentials in motor neurons. The chain is Mu-agatoxin-Aa1d from Agelenopsis aperta (North American funnel-web spider).